We begin with the raw amino-acid sequence, 91 residues long: Kazal-type trypsin inhibitor (91 aa).

Residues 1 to 22 (MRHIGVFVGVLALALVLLVVEA) form the signal peptide. In terms of domain architecture, Kazal-like spans 25 to 78 (DAERGVCACPRIYMPVCGSNLKTYNNDCLLRCEINSDLGRANNLRKIADQACDN). 3 disulfide bridges follow: C31–C56, C33–C52, and C41–C76. N78 is a glycosylation site (N-linked (GlcNAc...) asparagine).

In terms of assembly, interacts with human PLG (plasmin). Female salivary gland. Female gut at 3 and 24 hours after blood feeding. Female carcass. Male tissues. Not detected in ovary and fat body at 3 and 24 hours after blood feeding.

The protein resides in the secreted. Its function is as follows. Anticoagulant protein that decreases host thrombin (F2) activity via an uncompetitive inhibition mechanism. Inhibits amidolytic activity of host plasmin (PLG). Inhibits amidolytic activity of host trypsin. Inhibits trypsin-like endogenous activity from gut of female mosquitoes 24 hours after feeding and weakly affects enzyme activity from gut 3 hours after feeding, suggesting a possible role as an inhibitor of endogenous proteases. In terms of biological role, (Microbial infection) Limits host plasmin-mediated enhancement of dengue virus type 2 infection in mosquito midgut. In Aedes aegypti (Yellowfever mosquito), this protein is Kazal-type trypsin inhibitor.